Consider the following 261-residue polypeptide: Carnitinyl-CoA dehydratase (261 aa).

Residue Glu111 is the Nucleophile of the active site. Glu131 (proton acceptor) is an active-site residue.

Belongs to the enoyl-CoA hydratase/isomerase family.

The catalysed reaction is (R)-carnitinyl-CoA = crotonobetainyl-CoA + H2O. The protein operates within amine and polyamine metabolism; carnitine metabolism. In terms of biological role, catalyzes the reversible dehydration of L-carnitinyl-CoA to crotonobetainyl-CoA. The chain is Carnitinyl-CoA dehydratase from Escherichia coli O157:H7.